Here is a 355-residue protein sequence, read N- to C-terminus: cGAMP-activated phospholipase (355 aa).

The 198-residue stretch at 17–214 folds into the PNPLA domain; it reads LSLNGGGARG…VANNPSFIGL (198 aa). Positions 21–26 match the GXGXXG motif; it reads GGGARG. The GXSXG signature appears at 60-64; sequence GTSIG. Catalysis depends on S62, which acts as the Nucleophile. The active-site Proton acceptor is the D201. Positions 201–203 match the DGA/G motif; sequence DGG.

Belongs to the patatin family.

It catalyses the reaction a 1,2-diacyl-sn-glycero-3-phosphocholine + H2O = a 2-acyl-sn-glycero-3-phosphocholine + a fatty acid + H(+). The catalysed reaction is 1,2-di-(9Z-octadecenoyl)-sn-glycero-3-phosphoethanolamine + 2 H2O = sn-glycero-3-phosphoethanolamine + 2 (9Z)-octadecenoate + 2 H(+). Its activity is regulated as follows. Phospholipase activity is specifically activated upon 3',3'-cGAMP (cGAMP) binding. Is not activated by the other cyclic dinucleotides 3',3'-cUAMP, 3',3'-c-diAMP and 3',3'-c-diGMP. Therefore, is specifically activated by only the nucleotide synthesized from its adjacently encoded nucleotidyltransferase (DncV). The cGAMP-activation of lipase is inhibited by T4 phage protein Acb2 (Vs.4). Functionally, effector phospholipase of a CBASS antiviral system. CBASS (cyclic oligonucleotide-based antiphage signaling system) provides immunity against bacteriophages. The CD-NTase protein (DncV) synthesizes cyclic nucleotides in response to infection; these serve as specific second messenger signals. The signals activate a diverse range of effectors, leading to bacterial cell death and thus abortive phage infection. A type II-A(GA) CBASS system. Its function is as follows. Phospholipase that is activated upon binding to the cyclic dinucleotide (CDN) second messenger 3',3'-cyclic GMP-AMP (3',3'-cGAMP). Then degrades phosphatidylethanolamine (PE) and phosphatidylglycerol (PG), the major phospholipids in the cell membrane of V.cholerae, releasing 16:1 and 18:1 free fatty acids. Upon expression in E.coli with cognate DncV, the cell inner membrane shrinks and separates from the cell wall. Protects E.coli against phage infection. When the CBASS operon (capV-dncV-cap2-cap3) is introduced in E.coli MG1655 there is about 100-fold protection against phages P1 and T2. When the operon is introduced in E.coli MG1655 there is a more than 10(3) decrease in the efficiency of T2 plaque formation. Protects 100-fold against phage T5, offers no protection against T7. When the operon is introduced in E.coli MG1655 it protects against phages T2, T4, T5 and T6. Another paper shows the operon confers protection against phages P1, T2, T5 and T6 but not T4 or lambda. This Vibrio cholerae serotype O1 (strain ATCC 39315 / El Tor Inaba N16961) protein is cGAMP-activated phospholipase.